Here is a 412-residue protein sequence, read N- to C-terminus: tRNA pseudouridine synthase Pus10 (412 aa).

The THUMP domain occupies 73–197 (HEPSIKFLSN…TGSVEVQIMP (125 aa)). 2 residues coordinate substrate: Y308 and Y376.

This sequence belongs to the pseudouridine synthase Pus10 family.

It carries out the reaction uridine(54) in tRNA = pseudouridine(54) in tRNA. It catalyses the reaction uridine(55) in tRNA = pseudouridine(55) in tRNA. Its function is as follows. Responsible for synthesis of pseudouridine from uracil-54 and uracil-55 in the psi GC loop of transfer RNAs. The sequence is that of tRNA pseudouridine synthase Pus10 from Vulcanisaeta distributa (strain DSM 14429 / JCM 11212 / NBRC 100878 / IC-017).